Consider the following 266-residue polypeptide: MKLSLSPPPYADAPVVVLISGLGGSGSYWLPQLAVLDQEYQVVCYDQRGTGNNPDTLAEDYSIAQMAAELHQALVAAGIERYAVIGHALGALVGMQLALDYPASVTVLVSVNGWLRINAHTRRCFQVREQLLHSGGAQAWVEAQPLFLYPADWMAARAPRLEAEDALALAHFQGKNNLLRRLNALKRADFSRHADRIRCPVQIICASDDLLVPSACSSELHAALPDSQKMVMRYGGHACNVTAPETFNALLLNGLASLLHHREAAL.

The AB hydrolase-1 domain maps to 14 to 116 (PVVVLISGLG…VLVSVNGWLR (103 aa)).

It belongs to the AB hydrolase superfamily. Hydrolase RutD family.

It carries out the reaction carbamate + 2 H(+) = NH4(+) + CO2. Functionally, involved in pyrimidine catabolism. May facilitate the hydrolysis of carbamate, a reaction that can also occur spontaneously. The chain is Putative carbamate hydrolase RutD from Escherichia coli O81 (strain ED1a).